A 226-amino-acid polypeptide reads, in one-letter code: ADP-ribosylation factor-like protein 6-interacting protein 6 (226 aa).

The interval 1-49 is disordered; that stretch reads MSFVESWRFAGARRRRQVTPGPATRPGYSDYTQGDSWGEGEGDEDEGCD. Residues Ser-2 and Ser-36 each carry the phosphoserine modification. Over residues 38–48 the composition is skewed to acidic residues; the sequence is GEGEGDEDEGC. 3 positions are modified to phosphoserine: Ser-60, Ser-65, and Ser-80. Transmembrane regions (helical) follow at residues 111–131, 150–170, and 205–225; these read ILCSLLFAVLLAFLLAIAYMI, LLGFWSLLIISLTAGLSCCSF, and MGYSMAILNGIVAALTVAWCL.

The protein belongs to the ARL6IP6 family.

The protein localises to the nucleus inner membrane. The polypeptide is ADP-ribosylation factor-like protein 6-interacting protein 6 (Arl6ip6) (Mus musculus (Mouse)).